A 178-amino-acid polypeptide reads, in one-letter code: Transcription factor E (178 aa).

The HTH TFE/IIEalpha-type domain occupies 5 to 89 (AEELILSLAK…YWKVNIDQIN (85 aa)).

This sequence belongs to the TFE family. Monomer. Interaction with RNA polymerase subunits RpoF and RpoE is necessary for Tfe stimulatory transcription activity. Able to interact with Tbp and RNA polymerase in the absence of DNA promoter. Interacts both with the preinitiation and elongation complexes.

Functionally, transcription factor that plays a role in the activation of archaeal genes transcribed by RNA polymerase. Facilitates transcription initiation by enhancing TATA-box recognition by TATA-box-binding protein (Tbp), and transcription factor B (Tfb) and RNA polymerase recruitment. Not absolutely required for transcription in vitro, but particularly important in cases where Tbp or Tfb function is not optimal. It dynamically alters the nucleic acid-binding properties of RNA polymerases by stabilizing the initiation complex and destabilizing elongation complexes. Seems to translocate with the RNA polymerase following initiation and acts by binding to the non template strand of the transcription bubble in elongation complexes. This chain is Transcription factor E, found in Sulfurisphaera tokodaii (strain DSM 16993 / JCM 10545 / NBRC 100140 / 7) (Sulfolobus tokodaii).